We begin with the raw amino-acid sequence, 502 residues long: ATP synthase subunit alpha (502 aa).

An ATP-binding site is contributed by G169–T176.

The protein belongs to the ATPase alpha/beta chains family. In terms of assembly, F-type ATPases have 2 components, CF(1) - the catalytic core - and CF(0) - the membrane proton channel. CF(1) has five subunits: alpha(3), beta(3), gamma(1), delta(1), epsilon(1). CF(0) has three main subunits: a(1), b(2) and c(9-12). The alpha and beta chains form an alternating ring which encloses part of the gamma chain. CF(1) is attached to CF(0) by a central stalk formed by the gamma and epsilon chains, while a peripheral stalk is formed by the delta and b chains.

It localises to the cell inner membrane. It catalyses the reaction ATP + H2O + 4 H(+)(in) = ADP + phosphate + 5 H(+)(out). Produces ATP from ADP in the presence of a proton gradient across the membrane. The alpha chain is a regulatory subunit. The protein is ATP synthase subunit alpha of Kosmotoga olearia (strain ATCC BAA-1733 / DSM 21960 / TBF 19.5.1).